A 235-amino-acid chain; its full sequence is Urease accessory protein UreF (235 aa).

It belongs to the UreF family. As to quaternary structure, ureD, UreF and UreG form a complex that acts as a GTP-hydrolysis-dependent molecular chaperone, activating the urease apoprotein by helping to assemble the nickel containing metallocenter of UreC. The UreE protein probably delivers the nickel.

Its subcellular location is the cytoplasm. Functionally, required for maturation of urease via the functional incorporation of the urease nickel metallocenter. This is Urease accessory protein UreF from Ureaplasma parvum serovar 3 (strain ATCC 27815 / 27 / NCTC 11736).